The chain runs to 564 residues: Probable cysteine--tRNA ligase, mitochondrial (564 aa).

Residue Cys78 participates in Zn(2+) binding. Position 79 (Gly79) interacts with L-cysteine. Positions 80–90 match the 'HIGH' region motif; it reads PTVYDHAHLGH. Thr119 is a binding site for L-cysteine. Residues 124–127 carry the 'KIIK' region motif; that stretch reads KIIK. 3 residues coordinate Zn(2+): Cys257, His282, and Glu286. His282 serves as a coordination point for L-cysteine. The 'KMSKS' region motif lies at 317–321; sequence KMSKS. Residue Lys320 participates in ATP binding.

The protein belongs to the class-I aminoacyl-tRNA synthetase family. Requires Zn(2+) as cofactor.

The protein localises to the mitochondrion. It carries out the reaction tRNA(Cys) + L-cysteine + ATP = L-cysteinyl-tRNA(Cys) + AMP + diphosphate. The catalysed reaction is 2 L-cysteine = S-sulfanyl-L-cysteine + L-alanine. It catalyses the reaction S-sulfanyl-L-cysteine + L-cysteine = S-disulfanyl-L-cysteine + L-alanine. The enzyme catalyses S-sulfanyl-L-cysteine + tRNA(Cys) + ATP = (S)-sulfanyl-L-cysteinyl-tRNA(Cys) + AMP + diphosphate. It carries out the reaction S-disulfanyl-L-cysteine + tRNA(Cys) + ATP = (S)-disulfanyl-L-cysteinyl-tRNA(Cys) + AMP + diphosphate. Functionally, mitochondrial cysteine-specific aminoacyl-tRNA synthetase that catalyzes the ATP-dependent ligation of cysteine to tRNA(Cys). In terms of biological role, in addition to its role as an aminoacyl-tRNA synthetase, has also cysteine persulfide synthase activity. Produces reactive persulfide species such as cysteine persulfide (CysSSH) from substrate cysteine and mediate direct incorporation of CysSSH into proteins during translations, resulting in protein persulfides and polysulfides. CysSSHs behave as potent antioxidants and cellular protectants. The protein is Probable cysteine--tRNA ligase, mitochondrial of Homo sapiens (Human).